The sequence spans 158 residues: Ankyrin repeat domain-containing protein 37 (158 aa).

ANK repeat units follow at residues 1-25 (MLLLDCNPEVDSLKHLLETGASVNA), 30-59 (CEQSPVHLAAGGGLACFLLWQLQTGADLNQ), and 63-92 (FGEAPLHKAARVGSMECLSLLVASDAQIDL). The short motif at 129–149 (EQPNKDHCVQVLRLKRSFGSE) is the Nuclear localization signal element.

Ubiquitinated by the CRL2(FEM1B) complex, leading to its degradation.

It localises to the nucleus. The protein resides in the cytoplasm. This is Ankyrin repeat domain-containing protein 37 (ANKRD37) from Bos taurus (Bovine).